The primary structure comprises 142 residues: HTH-type transcriptional regulator LysM (142 aa).

Residues 6 to 69 form the HTH asnC-type domain; the sequence is IDESDLKILE…ELENEIRAIV (64 aa). The H-T-H motif DNA-binding region spans 25-44; that stretch reads YTLIAKELKVSEAAIRKRIE.

In terms of assembly, homotetramer.

It localises to the cytoplasm. The protein operates within amino-acid biosynthesis; L-lysine biosynthesis via AAA pathway [regulation]. Functionally, in the absence or at low concentrations of lysine, activates the biosynthesis of this amino acid via the alpha-aminoadipate (AAA) pathway. The protein is HTH-type transcriptional regulator LysM (lysM) of Saccharolobus solfataricus (strain ATCC 35092 / DSM 1617 / JCM 11322 / P2) (Sulfolobus solfataricus).